The sequence spans 191 residues: MPALPILDPADLPADAVEVGRIADAWGVKGWFKVLPYSADPEALFSSKRWYLQPSEKGAKSFFTGTVLLPIRQAREHSDSVVAQAQGVDDRDAAEALRGARIFVPRSSFPTAAEDEYYWVDLIGLEVVNREGVALGSVRELLATGPQTTLVLSFPQEGGKEGERMIPFVSAFVDRVDIAGRRIVVDWQPDY.

The 78-residue stretch at 114 to 191 folds into the PRC barrel domain; the sequence is EDEYYWVDLI…RIVVDWQPDY (78 aa).

Belongs to the RimM family. As to quaternary structure, binds ribosomal protein uS19.

Its subcellular location is the cytoplasm. In terms of biological role, an accessory protein needed during the final step in the assembly of 30S ribosomal subunit, possibly for assembly of the head region. Essential for efficient processing of 16S rRNA. May be needed both before and after RbfA during the maturation of 16S rRNA. It has affinity for free ribosomal 30S subunits but not for 70S ribosomes. This chain is Ribosome maturation factor RimM, found in Paracidovorax citrulli (strain AAC00-1) (Acidovorax citrulli).